The primary structure comprises 314 residues: Methionyl-tRNA formyltransferase (314 aa).

112–115 (SLLP) serves as a coordination point for (6S)-5,6,7,8-tetrahydrofolate.

The protein belongs to the Fmt family.

It catalyses the reaction L-methionyl-tRNA(fMet) + (6R)-10-formyltetrahydrofolate = N-formyl-L-methionyl-tRNA(fMet) + (6S)-5,6,7,8-tetrahydrofolate + H(+). Its function is as follows. Attaches a formyl group to the free amino group of methionyl-tRNA(fMet). The formyl group appears to play a dual role in the initiator identity of N-formylmethionyl-tRNA by promoting its recognition by IF2 and preventing the misappropriation of this tRNA by the elongation apparatus. The sequence is that of Methionyl-tRNA formyltransferase from Legionella pneumophila subsp. pneumophila (strain Philadelphia 1 / ATCC 33152 / DSM 7513).